Here is a 719-residue protein sequence, read N- to C-terminus: DNA ligase (719 aa).

Residues 42–46, 91–92, and glutamate 125 contribute to the NAD(+) site; these read DAEYD and SL. The N6-AMP-lysine intermediate role is filled by lysine 127. Positions 148, 184, 300, and 324 each coordinate NAD(+). Residues cysteine 429, cysteine 432, cysteine 447, and cysteine 453 each coordinate Zn(2+). The BRCT domain maps to 638 to 719; sequence TASSPIAGKT…WLQLIEGSYI (82 aa).

The protein belongs to the NAD-dependent DNA ligase family. LigA subfamily. Mg(2+) serves as cofactor. Requires Mn(2+) as cofactor.

The catalysed reaction is NAD(+) + (deoxyribonucleotide)n-3'-hydroxyl + 5'-phospho-(deoxyribonucleotide)m = (deoxyribonucleotide)n+m + AMP + beta-nicotinamide D-nucleotide.. DNA ligase that catalyzes the formation of phosphodiester linkages between 5'-phosphoryl and 3'-hydroxyl groups in double-stranded DNA using NAD as a coenzyme and as the energy source for the reaction. It is essential for DNA replication and repair of damaged DNA. The polypeptide is DNA ligase (Bartonella quintana (strain Toulouse) (Rochalimaea quintana)).